Here is a 445-residue protein sequence, read N- to C-terminus: Rab GDP dissociation inhibitor beta (445 aa).

Residue Met1 is modified to N-acetylmethionine. Lys57 is modified (N6-succinyllysine). At Ser61 the chain carries Phosphoserine. The residue at position 112 (Lys112) is an N6-acetyllysine. Residue Ser130 is modified to Phosphoserine. Lys269 is subject to N6-acetyllysine. Ser382 bears the Phosphoserine mark.

Belongs to the Rab GDI family. In terms of assembly, interacts with RHOH. Interacts with the GDP-bound inactive forms of RAB3A, RAB3B, RAB3C, RAB5A, RAB5B, RAB5C, RAB8A, RAB8B, RAB10, RAB12, RAB35, and RAB43; binds RAB3D to a lesser extent. Interacts with DZIP1; this interaction negatively regulates the interaction of GDI2 with GDP-bound RAB8A. As to expression, ubiquitous.

The protein resides in the cytoplasm. It localises to the membrane. It is found in the golgi apparatus. The protein localises to the trans-Golgi network. Functionally, GDP-dissociation inhibitor preventing the GDP to GTP exchange of most Rab proteins. By keeping these small GTPases in their inactive GDP-bound form regulates intracellular membrane trafficking. Negatively regulates protein transport to the cilium and ciliogenesis through the inhibition of RAB8A. This chain is Rab GDP dissociation inhibitor beta (GDI2), found in Homo sapiens (Human).